We begin with the raw amino-acid sequence, 549 residues long: Polymorphic pseudokinase ROP5 (549 aa).

The N-terminal stretch at 1–24 (MATKLARLATWLVLVGCLLWRAGA) is a signal peptide. The Protein kinase domain occupies 234 to 527 (LKLVEPLRVG…LEAMETPEFL (294 aa)). ATP contacts are provided by arginine 241, aspartate 244, arginine 245, serine 246, lysine 263, methionine 337, proline 338, alanine 340, aspartate 343, and aspartate 393. Aspartate 244 is an ADP binding site. ADP-binding residues include serine 246, lysine 263, methionine 337, proline 338, and alanine 340. Aspartate 393 contacts ADP. Positions 393 and 407 each coordinate Mg(2+). Residue asparagine 434 is glycosylated (N-linked (GlcNAc...) asparagine). Cysteine 458 and cysteine 492 are oxidised to a cystine.

Belongs to the protein kinase superfamily. Ser/Thr protein kinase family. As to quaternary structure, component of a complex at least composed of ROP18 and ROP5. Interacts with GRA7. Interacts with ROP17. Interacts with mouse IRGA6/IIGP1; the interaction results in inhibition of IRGA6/IIGP1 GTPase activity and/or oligomerization.

It localises to the secreted. Its subcellular location is the parasitophorous vacuole. It is found in the cytoplasmic vesicle. The protein resides in the secretory vesicle. The protein localises to the rhoptry. In terms of biological role, pseudokinase. Essential for virulence in the type I lineage. Mediates parasite survival in mouse monocytes. Required for the parasite ability to resist mouse innate immune effectors triggered by the IFN-gamma (IFNG). Reduces the accumulation of mouse IRGA6 (IIGP1) and IRGB6 (TGTP1/TGTP2), immunity-related GTPases (IRGs) that protect mice from infection by certain intracellular pathogens, on the parasitophorous vacuole and IRG-mediated killing of parasites by mouse cells. Regulates the activity of ROP18, an active kinase that targets IRGs to prevent IRG-mediated parasite killing by mouse cells. Acts as an allosteric inhibitor of mouse IRGA6 (IIGP1). Does not affect IFN-gamma (IFNG)-mediated parasite killing in human cells that do not possess the large variety of IRGs. This is Polymorphic pseudokinase ROP5 from Toxoplasma gondii.